Consider the following 134-residue polypeptide: ATP synthase epsilon chain (134 aa).

It belongs to the ATPase epsilon chain family. As to quaternary structure, F-type ATPases have 2 components, CF(1) - the catalytic core - and CF(0) - the membrane proton channel. CF(1) has five subunits: alpha(3), beta(3), gamma(1), delta(1), epsilon(1). CF(0) has three main subunits: a, b and c.

It is found in the cell membrane. Functionally, produces ATP from ADP in the presence of a proton gradient across the membrane. The sequence is that of ATP synthase epsilon chain from Ruminiclostridium cellulolyticum (strain ATCC 35319 / DSM 5812 / JCM 6584 / H10) (Clostridium cellulolyticum).